Here is a 295-residue protein sequence, read N- to C-terminus: Probable dTDP-4,6-dihydroxy-2-methyloxan-3-one 4-ketoreductase (295 aa).

NADH-binding positions include 10–12 (GML), 36–37 (DV), 60–62 (AYT), Tyr-126, and Lys-130. NADPH is bound by residues 11–12 (ML), 36–37 (DV), 60–62 (AYT), Tyr-126, and Lys-130. Tyr-126 functions as the Proton donor/acceptor in the catalytic mechanism.

The protein belongs to the dTDP-4-dehydrorhamnose reductase family. Mg(2+) serves as cofactor.

It functions in the pathway antibiotic biosynthesis. Functionally, involved in the biosynthesis of one of the two 2,6-deoxysugars, dTDP-L-oleandrose, attached to the macrolactone ring oleandolide to produce the aglycone antibiotic oleandomycin. Probably catalyzes the reduction of dTDP-4-keto-2,6-dideoxy-beta-L-galactose to yield dTDP-L-olivose. This Streptomyces antibioticus protein is Probable dTDP-4,6-dihydroxy-2-methyloxan-3-one 4-ketoreductase.